Here is a 123-residue protein sequence, read N- to C-terminus: Small ribosomal subunit protein uS12cz/uS12cy (123 aa).

It belongs to the universal ribosomal protein uS12 family. Part of the 30S ribosomal subunit.

Its subcellular location is the plastid. The protein localises to the chloroplast. Functionally, with S4 and S5 plays an important role in translational accuracy. Located at the interface of the 30S and 50S subunits. The polypeptide is Small ribosomal subunit protein uS12cz/uS12cy (rps12-A) (Eucalyptus globulus subsp. globulus (Tasmanian blue gum)).